A 231-amino-acid chain; its full sequence is MKNPMLEAASLLLEKLLLISNFKLFSVSVPGGGTGKNRPYEISSFVRGDVLEVSRTHFIHYGIYLGENRVAHLMPDILLALTNDKERTQKVVSNKRLLLGVICKVASIRVDTVEDFAYGADILVNHLDGTLKKKSLLNEEVARRAEQQLGLTPYSLLWNNCEHFVTYCRYGSRISPQAEKFYDTVKIIIRDQRSSLASAVLGLASIVYTGLASYMTLPAICIPFCLWMMSG.

The Cytoplasmic segment spans residues 1–194 (MKNPMLEAAS…VKIIIRDQRS (194 aa)). In terms of domain architecture, LRAT spans 50-177 (VLEVSRTHFI…CRYGSRISPQ (128 aa)). Residues histidine 60 and histidine 72 contribute to the active site. Cysteine 161 serves as the catalytic Acyl-thioester intermediate. The helical transmembrane segment at 195–215 (SLASAVLGLASIVYTGLASYM) threads the bilayer. The Lumenal portion of the chain corresponds to 216–231 (TLPAICIPFCLWMMSG).

It belongs to the H-rev107 family. In terms of tissue distribution, hepatic stellate cells and endothelial cells (at protein level).

It localises to the endoplasmic reticulum membrane. The protein localises to the rough endoplasmic reticulum. The protein resides in the endosome. Its subcellular location is the multivesicular body. It is found in the cytoplasm. It localises to the perinuclear region. The enzyme catalyses all-trans-retinol--[retinol-binding protein] + a 1,2-diacyl-sn-glycero-3-phosphocholine = apo--[retinol-binding protein] + an all-trans-retinyl ester + a 2-acyl-sn-glycero-3-phosphocholine. It catalyses the reaction 1,2-diheptanoyl-sn-glycero-3-phosphocholine + all-trans-retinol--[retinol-binding protein] = all-trans-retinyl heptanoate + 2-heptanoyl-sn-glycero-3-phosphocholine + apo--[retinol-binding protein]. It carries out the reaction 1,2-dioctanoyl-sn-glycero-3-phosphocholine + all-trans-retinol--[retinol-binding protein] = 2-octanoyl-sn-glycero-3-phosphocholine + all-trans-retinyl octanoate + apo--[retinol-binding protein]. The catalysed reaction is all-trans-retinol--[retinol-binding protein] + 1,2-dihexadecanoyl-sn-glycero-3-phosphocholine = apo--[retinol-binding protein] + all-trans-retinyl hexadecanoate + 2-hexadecanoyl-sn-glycero-3-phosphocholine. The enzyme catalyses 1,2-didodecanoyl-sn-glycero-3-phosphocholine + all-trans-retinol--[retinol-binding protein] = 2-dodecanoyl-sn-glycero-3-phosphocholine + all-trans-retinyl dodecanoate + apo--[retinol-binding protein]. It catalyses the reaction 1,2-dihexadecanoyl-sn-glycero-3-phosphocholine + all-trans-retinol = all-trans-retinyl hexadecanoate + 2-hexadecanoyl-sn-glycero-3-phosphocholine. It participates in cofactor metabolism; retinol metabolism. With respect to regulation, inhibited by all-trans-retinyl alpha-bromoacetate and N-boc-L-biocytinyl-11-aminoundecane chloro-methyl ketone (BACMK). Its function is as follows. Transfers the acyl group from the sn-1 position of phosphatidylcholine to all-trans retinol, producing all-trans retinyl esters. Retinyl esters are storage forms of vitamin A. LRAT plays a critical role in vision. It provides the all-trans retinyl ester substrates for the isomerohydrolase which processes the esters into 11-cis-retinol in the retinal pigment epithelium; due to a membrane-associated alcohol dehydrogenase, 11 cis-retinol is oxidized and converted into 11-cis-retinaldehyde which is the chromophore for rhodopsin and the cone photopigments. Required for the survival of cone photoreceptors and correct rod photoreceptor cell morphology. This is Lecithin retinol acyltransferase (Lrat) from Mus musculus (Mouse).